We begin with the raw amino-acid sequence, 379 residues long: Homoserine O-succinyltransferase (379 aa).

An AB hydrolase-1 domain is found at 48–357 (NAVLICHALS…SAHGHDAFLM (310 aa)). Ser154 serves as the catalytic Nucleophile. Arg224 is a binding site for substrate. Active-site residues include Asp319 and His352. Asp353 is a substrate binding site.

The protein belongs to the AB hydrolase superfamily. MetX family. Homodimer.

It is found in the cytoplasm. The enzyme catalyses L-homoserine + succinyl-CoA = O-succinyl-L-homoserine + CoA. Its pathway is amino-acid biosynthesis; L-methionine biosynthesis via de novo pathway; O-succinyl-L-homoserine from L-homoserine: step 1/1. With respect to regulation, activity increases in the presence of MetW. Functionally, transfers a succinyl group from succinyl-CoA to L-homoserine, forming succinyl-L-homoserine. The chain is Homoserine O-succinyltransferase from Neisseria gonorrhoeae.